Reading from the N-terminus, the 605-residue chain is Replication and transcription activator (605 aa).

Disordered regions lie at residues 307–381 and 447–501; these read SLPS…EPEQ and RIRP…TPEA. Residues 321 to 338 show a composition bias toward low complexity; sequence SADCGDSSSSSSDSGNSD. Over residues 341-353 the composition is skewed to basic and acidic residues; sequence QSEREEARAEAPR. The segment covering 355-364 has biased composition (basic residues); the sequence is RAPKSRRTSR.

Belongs to the herpesviridae Rta family. As to quaternary structure, interacts with human ATF7IP protein, leading to promote and regulate host genes in virus-infected cells. Interacts with RNA polymerase III complex; this interaction downregulates small RNA transcription and 5'-pppRNA production.

Its subcellular location is the host nucleus. It is found in the virion tegument. Its function is as follows. Immediate-early transcription factor that controls the initiation of viral lytic gene expression and lytic reactivation from latency. Triggers lytic replication, and initiates a cellular senescence program in epithelial cells. Up-regulates human DCR3/TNFRSF6B by directly binding to its receptor. Globally induces a proteasome-dependent loss of SUMOylated proteins in the host cell and the loss of promeylocytic leukemia nuclear bodies. Improves the stability of the triplex capsid protein TRX1 by reducing the ubiquitination level of the latter. Mediates evasion of inflammasome activation and antiviral responses (T- and NK cell activation) during EBV early lytic infection. The chain is Replication and transcription activator from Epstein-Barr virus (strain GD1) (HHV-4).